A 397-amino-acid chain; its full sequence is Elongation factor Tu (397 aa).

Residues Leu10–Val207 form the tr-type G domain. Residues Gly19–Thr26 are G1. Gly19 to Thr26 provides a ligand contact to GTP. Thr26 is a Mg(2+) binding site. The tract at residues Gly60–Asn64 is G2. The G3 stretch occupies residues Asp81–Gly84. GTP is bound by residues Asp81–His85 and Asn136–Asp139. Residues Asn136–Asp139 are G4. The segment at Ser174–Arg176 is G5.

It belongs to the TRAFAC class translation factor GTPase superfamily. Classic translation factor GTPase family. EF-Tu/EF-1A subfamily. Monomer.

The protein localises to the cytoplasm. It catalyses the reaction GTP + H2O = GDP + phosphate + H(+). In terms of biological role, GTP hydrolase that promotes the GTP-dependent binding of aminoacyl-tRNA to the A-site of ribosomes during protein biosynthesis. The sequence is that of Elongation factor Tu from Pseudomonas putida (strain ATCC 700007 / DSM 6899 / JCM 31910 / BCRC 17059 / LMG 24140 / F1).